The primary structure comprises 206 residues: Small ribosomal subunit protein uS4 (206 aa).

In terms of domain architecture, S4 RNA-binding spans 96-156 (GRLDNVVYRM…EKSKKQARIK (61 aa)).

Belongs to the universal ribosomal protein uS4 family. As to quaternary structure, part of the 30S ribosomal subunit. Contacts protein S5. The interaction surface between S4 and S5 is involved in control of translational fidelity.

Its function is as follows. One of the primary rRNA binding proteins, it binds directly to 16S rRNA where it nucleates assembly of the body of the 30S subunit. In terms of biological role, with S5 and S12 plays an important role in translational accuracy. The chain is Small ribosomal subunit protein uS4 from Glaesserella parasuis serovar 5 (strain SH0165) (Haemophilus parasuis).